The sequence spans 339 residues: Phosphoribosylformylglycinamidine cyclo-ligase (339 aa).

The protein belongs to the AIR synthase family.

It is found in the cytoplasm. It catalyses the reaction 2-formamido-N(1)-(5-O-phospho-beta-D-ribosyl)acetamidine + ATP = 5-amino-1-(5-phospho-beta-D-ribosyl)imidazole + ADP + phosphate + H(+). It participates in purine metabolism; IMP biosynthesis via de novo pathway; 5-amino-1-(5-phospho-D-ribosyl)imidazole from N(2)-formyl-N(1)-(5-phospho-D-ribosyl)glycinamide: step 2/2. This Streptococcus thermophilus (strain ATCC BAA-491 / LMD-9) protein is Phosphoribosylformylglycinamidine cyclo-ligase.